A 193-amino-acid polypeptide reads, in one-letter code: Glycerol-3-phosphate acyltransferase (193 aa).

A run of 5 helical transmembrane segments spans residues 2–22 (AFII…AVIV), 51–71 (QAAF…VLIA), 78–98 (GVSL…PVYF), 112–132 (VLLG…VIVV), and 154–174 (IIAG…LLIW).

This sequence belongs to the PlsY family. As to quaternary structure, probably interacts with PlsX.

It localises to the cell inner membrane. The catalysed reaction is an acyl phosphate + sn-glycerol 3-phosphate = a 1-acyl-sn-glycero-3-phosphate + phosphate. The protein operates within lipid metabolism; phospholipid metabolism. Functionally, catalyzes the transfer of an acyl group from acyl-phosphate (acyl-PO(4)) to glycerol-3-phosphate (G3P) to form lysophosphatidic acid (LPA). This enzyme utilizes acyl-phosphate as fatty acyl donor, but not acyl-CoA or acyl-ACP. The polypeptide is Glycerol-3-phosphate acyltransferase (Coxiella burnetii (strain CbuG_Q212) (Coxiella burnetii (strain Q212))).